The following is a 387-amino-acid chain: Succinate--CoA ligase [ADP-forming] subunit beta (387 aa).

The ATP-grasp domain occupies 9–244 (KEVLRKFGVA…LNEEEPSEIE (236 aa)). Residues Lys-46, 53–55 (GRG), Glu-99, Cys-102, and Glu-107 contribute to the ATP site. Mg(2+) is bound by residues Asn-199 and Asp-213. Substrate-binding positions include Asn-264 and 321–323 (GIM).

The protein belongs to the succinate/malate CoA ligase beta subunit family. Heterotetramer of two alpha and two beta subunits. Mg(2+) is required as a cofactor.

The catalysed reaction is succinate + ATP + CoA = succinyl-CoA + ADP + phosphate. The enzyme catalyses GTP + succinate + CoA = succinyl-CoA + GDP + phosphate. It participates in carbohydrate metabolism; tricarboxylic acid cycle; succinate from succinyl-CoA (ligase route): step 1/1. Succinyl-CoA synthetase functions in the citric acid cycle (TCA), coupling the hydrolysis of succinyl-CoA to the synthesis of either ATP or GTP and thus represents the only step of substrate-level phosphorylation in the TCA. The beta subunit provides nucleotide specificity of the enzyme and binds the substrate succinate, while the binding sites for coenzyme A and phosphate are found in the alpha subunit. This chain is Succinate--CoA ligase [ADP-forming] subunit beta, found in Bdellovibrio bacteriovorus (strain ATCC 15356 / DSM 50701 / NCIMB 9529 / HD100).